The following is a 190-amino-acid chain: Elongation factor P 2 (190 aa).

Belongs to the elongation factor P family.

It is found in the cytoplasm. The protein operates within protein biosynthesis; polypeptide chain elongation. In terms of biological role, involved in peptide bond synthesis. Stimulates efficient translation and peptide-bond synthesis on native or reconstituted 70S ribosomes in vitro. Probably functions indirectly by altering the affinity of the ribosome for aminoacyl-tRNA, thus increasing their reactivity as acceptors for peptidyl transferase. This Chlamydia trachomatis serovar D (strain ATCC VR-885 / DSM 19411 / UW-3/Cx) protein is Elongation factor P 2 (efp2).